Consider the following 424-residue polypeptide: Histidine--tRNA ligase (424 aa).

This sequence belongs to the class-II aminoacyl-tRNA synthetase family. As to quaternary structure, homodimer.

The protein localises to the cytoplasm. It catalyses the reaction tRNA(His) + L-histidine + ATP = L-histidyl-tRNA(His) + AMP + diphosphate + H(+). The chain is Histidine--tRNA ligase from Escherichia coli (strain 55989 / EAEC).